The primary structure comprises 267 residues: 3-isopropylmalate dehydratase large subunit (267 aa).

[4Fe-4S] cluster is bound by residues cysteine 146, cysteine 206, and cysteine 209.

This sequence belongs to the aconitase/IPM isomerase family. LeuC type 1 subfamily. In terms of assembly, heterodimer of LeuC and LeuD. [4Fe-4S] cluster serves as cofactor.

It catalyses the reaction (2R,3S)-3-isopropylmalate = (2S)-2-isopropylmalate. It participates in amino-acid biosynthesis; L-leucine biosynthesis; L-leucine from 3-methyl-2-oxobutanoate: step 2/4. Functionally, catalyzes the isomerization between 2-isopropylmalate and 3-isopropylmalate, via the formation of 2-isopropylmaleate. This is 3-isopropylmalate dehydratase large subunit (leuC) from Cupriavidus necator (Alcaligenes eutrophus).